The primary structure comprises 281 residues: Sulfur carrier protein FdhD (281 aa).

Cys127 functions as the Cysteine persulfide intermediate in the catalytic mechanism. 264 to 269 (FAREGR) serves as a coordination point for Mo-bis(molybdopterin guanine dinucleotide).

Belongs to the FdhD family.

The protein localises to the cytoplasm. Required for formate dehydrogenase (FDH) activity. Acts as a sulfur carrier protein that transfers sulfur from IscS to the molybdenum cofactor prior to its insertion into FDH. This chain is Sulfur carrier protein FdhD, found in Mannheimia succiniciproducens (strain KCTC 0769BP / MBEL55E).